The chain runs to 315 residues: tRNA-specific adenosine deaminase subunit tad3 (315 aa).

Residues 158–299 (KRIESILEDL…AELNHRYLAY (142 aa)) enclose the CMP/dCMP-type deaminase domain. Positions 211, 253, and 256 each coordinate Zn(2+).

This sequence belongs to the cytidine and deoxycytidylate deaminase family. ADAT3 subfamily. In terms of assembly, heterodimer with Tad2.

It localises to the cytoplasm. The protein resides in the nucleus. In terms of biological role, structural subunit of tRNA-specific adenosine deaminase, which deaminates adenosine-34 (the first, also called wobble position of the anticodon) to inosine in many tRNAs. Inosine-34 allows the decoding of 3 different nucleotides at the third position of mRNA codons, as inosine is able to pair with U, C, and A. The wobble inosine tRNA modification is essential for cell cycle progression in the G1/S and G2/M transitions in fission yeast. The sequence is that of tRNA-specific adenosine deaminase subunit tad3 (tad3) from Schizosaccharomyces pombe (strain 972 / ATCC 24843) (Fission yeast).